The primary structure comprises 236 residues: Small ribosomal subunit protein uS2c (236 aa).

Belongs to the universal ribosomal protein uS2 family.

The protein resides in the plastid. Its subcellular location is the chloroplast. The chain is Small ribosomal subunit protein uS2c (rps2) from Carica papaya (Papaya).